We begin with the raw amino-acid sequence, 529 residues long: Auxin response factor 13 (529 aa).

Residues 1–22 form a disordered region; that stretch reads MARPPAATAPPPPPPPPPPPPP. Residues 7 to 22 are compositionally biased toward pro residues; it reads ATAPPPPPPPPPPPPP. The segment at residues 128–234 is a DNA-binding region (TF-B3); it reads YAKQLTQSDA…KLLVGVRRAA (107 aa). Disordered stretches follow at residues 443-462 and 497-529; these read IVTPQNGSPPDNPVNTPLSA and PEGVDDETATEEASDTSLPDSLTNGHNQDGARL. Positions 444 to 461 are enriched in polar residues; it reads VTPQNGSPPDNPVNTPLS. The segment covering 499 to 510 has biased composition (acidic residues); the sequence is GVDDETATEEAS. The span at 511–523 shows a compositional bias: polar residues; the sequence is DTSLPDSLTNGHN.

This sequence belongs to the ARF family. As to quaternary structure, homo and heterodimers. In terms of tissue distribution, expressed in roots, culms, leaves and young panicles.

The protein resides in the nucleus. Functionally, auxin response factors (ARFs) are transcriptional factors that bind specifically to the DNA sequence 5'-TGTCTC-3' found in the auxin-responsive promoter elements (AuxREs). In Oryza sativa subsp. japonica (Rice), this protein is Auxin response factor 13 (ARF13).